The following is a 365-amino-acid chain: Peptide chain release factor 2 (365 aa).

N5-methylglutamine is present on glutamine 251.

This sequence belongs to the prokaryotic/mitochondrial release factor family. In terms of processing, methylated by PrmC. Methylation increases the termination efficiency of RF2.

Its subcellular location is the cytoplasm. Peptide chain release factor 2 directs the termination of translation in response to the peptide chain termination codons UGA and UAA. The sequence is that of Peptide chain release factor 2 from Campylobacter jejuni (strain RM1221).